The following is a 153-amino-acid chain: Endoribonuclease YbeY (153 aa).

Positions 115, 119, and 125 each coordinate Zn(2+).

Belongs to the endoribonuclease YbeY family. Zn(2+) serves as cofactor.

The protein localises to the cytoplasm. In terms of biological role, single strand-specific metallo-endoribonuclease involved in late-stage 70S ribosome quality control and in maturation of the 3' terminus of the 16S rRNA. The sequence is that of Endoribonuclease YbeY from Blochmanniella floridana.